A 533-amino-acid polypeptide reads, in one-letter code: Probable lipid II flippase MurJ (533 aa).

The next 13 membrane-spanning stretches (helical) occupy residues E25–F45, V90–V110, L131–M151, F158–Y178, Y192–V212, L233–I253, I274–L294, F316–I336, T350–I370, Y389–A409, G412–L432, A449–W469, and G484–I504.

Belongs to the MurJ/MviN family.

The protein localises to the cell inner membrane. The protein operates within cell wall biogenesis; peptidoglycan biosynthesis. In terms of biological role, involved in peptidoglycan biosynthesis. Transports lipid-linked peptidoglycan precursors from the inner to the outer leaflet of the cytoplasmic membrane. This Rhizobium tropici protein is Probable lipid II flippase MurJ.